Here is a 119-residue protein sequence, read N- to C-terminus: Large ribosomal subunit protein bL20 (119 aa).

The protein belongs to the bacterial ribosomal protein bL20 family.

Binds directly to 23S ribosomal RNA and is necessary for the in vitro assembly process of the 50S ribosomal subunit. It is not involved in the protein synthesizing functions of that subunit. The sequence is that of Large ribosomal subunit protein bL20 from Streptococcus equi subsp. equi (strain 4047).